The chain runs to 260 residues: Triosephosphate isomerase (260 aa).

A substrate-binding site is contributed by 11–13 (NWK). The Electrophile role is filled by His103. The active-site Proton acceptor is Glu175. Residues Gly181, Ser220, and 241 to 242 (GG) contribute to the substrate site.

This sequence belongs to the triosephosphate isomerase family. As to quaternary structure, homodimer.

Its subcellular location is the cytoplasm. The enzyme catalyses D-glyceraldehyde 3-phosphate = dihydroxyacetone phosphate. It participates in carbohydrate biosynthesis; gluconeogenesis. It functions in the pathway carbohydrate degradation; glycolysis; D-glyceraldehyde 3-phosphate from glycerone phosphate: step 1/1. Functionally, involved in the gluconeogenesis. Catalyzes stereospecifically the conversion of dihydroxyacetone phosphate (DHAP) to D-glyceraldehyde-3-phosphate (G3P). In Shewanella sp. (strain MR-4), this protein is Triosephosphate isomerase.